Consider the following 72-residue polypeptide: Penaeidin-2a (72 aa).

An N-terminal signal peptide occupies residues M1–A21. 3 disulfide bridges follow: C45–C59, C48–C66, and C60–C67. K71 bears the Lysine amide mark.

In terms of tissue distribution, higher expression in hemocytes and to a lesser extent in heart, testis, gills, intestine, lymphoid organ and hepatopancreas. Traces in eyes and subcuticular epithelium. Not present in the brain.

It localises to the cytoplasmic granule. Functionally, antibacterial activity against M.luteus and E.coli bacteria. Antifungal activity against N.crassa and F.oxysporum. Presents chitin-binding activity. The sequence is that of Penaeidin-2a from Penaeus vannamei (Whiteleg shrimp).